The following is a 689-amino-acid chain: Elongation factor G (689 aa).

Residues 8-282 (KKTRNIGIMA…AVIDYLPSPV (275 aa)) form the tr-type G domain. Residues 17–24 (AHIDAGKT), 81–85 (DTPGH), and 135–138 (NKMD) contribute to the GTP site.

Belongs to the TRAFAC class translation factor GTPase superfamily. Classic translation factor GTPase family. EF-G/EF-2 subfamily.

It localises to the cytoplasm. In terms of biological role, catalyzes the GTP-dependent ribosomal translocation step during translation elongation. During this step, the ribosome changes from the pre-translocational (PRE) to the post-translocational (POST) state as the newly formed A-site-bound peptidyl-tRNA and P-site-bound deacylated tRNA move to the P and E sites, respectively. Catalyzes the coordinated movement of the two tRNA molecules, the mRNA and conformational changes in the ribosome. This is Elongation factor G from Halothermothrix orenii (strain H 168 / OCM 544 / DSM 9562).